A 563-amino-acid chain; its full sequence is 2-isopropylmalate synthase (563 aa).

The region spanning 31 to 305 (PIWMSTDLRD…DPGLDFAQIN (275 aa)) is the Pyruvate carboxyltransferase domain. Mg(2+) contacts are provided by D40, H244, H246, and N280. Positions 437–563 (RAEPIEYLSH…EWARLCGGAE (127 aa)) are regulatory domain.

Belongs to the alpha-IPM synthase/homocitrate synthase family. LeuA type 2 subfamily. Homodimer. Mg(2+) is required as a cofactor.

The protein resides in the cytoplasm. The enzyme catalyses 3-methyl-2-oxobutanoate + acetyl-CoA + H2O = (2S)-2-isopropylmalate + CoA + H(+). It functions in the pathway amino-acid biosynthesis; L-leucine biosynthesis; L-leucine from 3-methyl-2-oxobutanoate: step 1/4. Catalyzes the condensation of the acetyl group of acetyl-CoA with 3-methyl-2-oxobutanoate (2-ketoisovalerate) to form 3-carboxy-3-hydroxy-4-methylpentanoate (2-isopropylmalate). The polypeptide is 2-isopropylmalate synthase (Parvibaculum lavamentivorans (strain DS-1 / DSM 13023 / NCIMB 13966)).